The following is a 571-amino-acid chain: Membrane protein insertase YidC (571 aa).

The helical transmembrane segment at T4–S24 threads the bilayer. The segment at A29 to P76 is disordered. Low complexity-rich tracts occupy residues P34–A43 and A57–P76. 4 consecutive transmembrane segments (helical) span residues L369–Y389, G440–V460, Y483–A503, and P518–V538.

It belongs to the OXA1/ALB3/YidC family. Type 1 subfamily. In terms of assembly, interacts with the Sec translocase complex via SecD. Specifically interacts with transmembrane segments of nascent integral membrane proteins during membrane integration.

It is found in the cell inner membrane. Functionally, required for the insertion and/or proper folding and/or complex formation of integral membrane proteins into the membrane. Involved in integration of membrane proteins that insert both dependently and independently of the Sec translocase complex, as well as at least some lipoproteins. Aids folding of multispanning membrane proteins. The chain is Membrane protein insertase YidC from Stenotrophomonas maltophilia (strain R551-3).